A 374-amino-acid chain; its full sequence is Ribosomal RNA large subunit methyltransferase G (374 aa).

It belongs to the methyltransferase superfamily. RlmG family.

Its subcellular location is the cytoplasm. It catalyses the reaction guanosine(1835) in 23S rRNA + S-adenosyl-L-methionine = N(2)-methylguanosine(1835) in 23S rRNA + S-adenosyl-L-homocysteine + H(+). Its function is as follows. Specifically methylates the guanine in position 1835 (m2G1835) of 23S rRNA. The sequence is that of Ribosomal RNA large subunit methyltransferase G from Pseudomonas aeruginosa (strain UCBPP-PA14).